Here is a 377-residue protein sequence, read N- to C-terminus: Histidine protein methyltransferase 1 (377 aa).

It belongs to the methyltransferase superfamily. METTL18 family.

It localises to the cytoplasm. It is found in the nucleus. The enzyme catalyses L-histidyl-[protein] + S-adenosyl-L-methionine = N(tele)-methyl-L-histidyl-[protein] + S-adenosyl-L-homocysteine + H(+). Protein-histidine N-methyltransferase that mediates methylation of RPL3 at 'His-243'. Methylates ribosome-associated RPL3, but not free RPL3, thereby regulating 60S subunit assembly. In addition to RPL3, mediates His methylation of other proteins. The polypeptide is Histidine protein methyltransferase 1 (Saccharomyces cerevisiae (strain ATCC 204508 / S288c) (Baker's yeast)).